Consider the following 1032-residue polypeptide: Structural polyprotein (1032 aa).

Residue Asp-23 coordinates a divalent metal cation. The region spanning 501 to 723 (ADSPLGEEHW…QTLPHWTAGS (223 aa)) is the Peptidase S50 domain. Residue Ser-627 is the Nucleophile of the active site. Lys-670 is an active-site residue. Residues 986 to 1014 (LVNQPATAPRVPPRRIVSAQTAQTDPPGR) form a disordered region. Positions 1021–1030 (LRRVRGEDND) are interaction with VP1 protein.

In terms of assembly, homotrimer. A central divalent metal stabilizes the VP2 trimer. As to quaternary structure, homodimer. Interacts (via C-terminus) with VP1 in the cytoplasm. Capsid VP3 interacts with VP2. Post-translationally, specific enzymatic cleavages yield mature proteins. The capsid assembly seems to be regulated by polyprotein processing. The protease VP4 cleaves itself off the polyprotein, thus releasing pre-VP2 and VP3 within the infected cell. During capsid assembly, the C-terminus of pre-VP2 is further processed by VP4, giving rise to VP2, the external capsid protein and three small peptides that all stay closely associated with the capsid.

Its subcellular location is the virion. It is found in the host cytoplasm. Functionally, capsid protein VP2 self assembles to form an icosahedral capsid with a T=13 symmetry, about 70 nm in diameter, and consisting of 260 VP2 trimers. The capsid encapsulates the genomic dsRNA. VP2 is also involved in attachment and entry into the host cell. In terms of biological role, the precursor of VP2 plays an important role in capsid assembly. First, pre-VP2 and VP2 oligomers assemble to form a procapsid. Then, the pre-VP2 intermediates may be processed into VP2 proteins by proteolytic cleavage mediated by VP4 to obtain the mature virion. The final capsid is composed of pentamers and hexamers but VP2 has a natural tendency to assemble into all-pentameric structures. Therefore pre-VP2 may be required to allow formation of the hexameric structures. Protease VP4 is a serine protease that cleaves the polyprotein into its final products. Pre-VP2 is first partially cleaved, and may be completely processed by VP4 upon capsid maturation. Its function is as follows. Capsid protein VP3 plays a key role in virion assembly by providing a scaffold for the capsid made of VP2. May self-assemble to form a T=4-like icosahedral inner-capsid composed of at least 180 trimers. Plays a role in genomic RNA packaging by recruiting VP1 into the capsid and interacting with the dsRNA genome segments to form a ribonucleoprotein complex. Additionally, the interaction of the VP3 C-terminal tail with VP1 removes the inherent structural blockade of the polymerase active site. Thus, VP3 can also function as a transcriptional activator. Functionally, structural peptide 1 is a small peptide derived from pre-VP2 C-terminus. It destabilizes and perforates cell membranes, suggesting a role during entry. In terms of biological role, structural peptide 2 is a small peptide derived from pre-VP2 C-terminus. It is not essential for the virus viability, but viral growth is affected when missing. Structural peptide 3 is a small peptide derived from pre-VP2 C-terminus. It is not essential for the virus viability, but viral growth is affected when missing. The sequence is that of Structural polyprotein from Drosophila melanogaster (Fruit fly).